The primary structure comprises 593 residues: MQIIEITEPKQTDFQQKLQIAVGIDFGTTNSLIAIATNRKVKIIKSIGDKELIPTTIDFINEDLIIGNNKGLHSIKRLFGKTLKEILNTTTLFSLVKDYLDINSSELKLNFANKKMRIAEIAAEVFIYLKNQAEKQLKNNITKAVITVPAHFNDAARGEIMLAAKIAGFEVLRLIAEPTAAAYAYGLNKNQTGRYLVYDLGGGTFDVSILNIQEGIFQVIATNGDNMLGGDDIDVVITQYLCNKFDLPHSIETLQLAKKAKEILTYKESFNNDIISINKQTLEQLISPLVERTINITQECLEQSGNPNIDGVILVGGTTRIPLIKDELYKAFKIDILSDIDPDKAVVCGAALQAENLITQHTNSLLIDVVPLSLGIELYGGIVEKIITRNTPIPIAVIKEFTTYADNQTGIQFHILQGEREMAADCRSLARFELKGLPPMKAGNIRVEVTFAIDADGILSVSAYEKISNISHNIEIKPNHGINKTEIETMLKNAYKNAKIDYTTRLLQEAVIETEALMSSIERSIIKLTKLLSESEISIINALLDNIKDAVQTRDQILIKNSIKEFKSKIKKYLDTKLNINDLRKCKNSNQIK.

This sequence belongs to the heat shock protein 70 family.

Functionally, chaperone involved in the maturation of iron-sulfur cluster-containing proteins. Has a low intrinsic ATPase activity which is markedly stimulated by HscB. The polypeptide is Chaperone protein HscA homolog (hscA) (Rickettsia prowazekii (strain Madrid E)).